We begin with the raw amino-acid sequence, 352 residues long: Minor capsid protein VP2 (352 aa).

G2 carries the N-myristoyl glycine; by host lipid modification. Positions 273 to 308 are D1; sequence SGEFIEKTLAPGGANQRIAPQWMLPLLLGLYGTVTP. The helical transmembrane segment at 290–310 threads the bilayer; the sequence is IAPQWMLPLLLGLYGTVTPAL. Residues 312 to 352 form a disordered region; the sequence is AYEDAPSKKKRRMSRGSSQKAKGPRASSKTSYKRRRRSTRS. The tract at residues 313-352 is DNA-binding; the sequence is YEDAPSKKKRRMSRGSSQKAKGPRASSKTSYKRRRRSTRS. Residues 316-324 carry the Nuclear localization signal motif; that stretch reads APSKKKRRM. The segment covering 342–352 has biased composition (basic residues); it reads SYKRRRRSTRS.

This sequence belongs to the polyomaviruses capsid protein VP2 family. As to quaternary structure, forms homooligomers, and heterooligomers with VP3 in the endoplasmic reticulum membrane. Interacts (via D1 domain) with VP1. Interacts (via D1 domain) with VP1.

The protein resides in the virion. The protein localises to the host nucleus. Its subcellular location is the host endoplasmic reticulum. It localises to the host endoplasmic reticulum membrane. Structural protein that resides within the core of the capsid surrounded by 72 VP1 pentamers. Participates in host cell receptor binding together with VP1. Following virus endocytosis and trafficking to the endoplasmic reticulum, VP2 and VP3 form oligomers and integrate into the endoplasmic reticulum membrane. Heterooligomer VP2-VP3 may create a viroporin for transporting the viral genome across the endoplasmic reticulum membrane to the cytoplasm. Nuclear entry of the viral DNA involves the selective exposure and importin recognition of VP2 or VP3 nuclear localization signal (shared C-terminus). Plays a role in virion assembly within the nucleus in particular through a DNA-binding domain located in the C-terminal region. An N-terminal myristoylation suggests a scaffold function for virion assembly. Functionally, structural protein that resides within the core of the capsid surrounded by 72 VP1 pentamers. Following virus endocytosis and trafficking to the endoplasmic reticulum, VP2 and VP3 form oligomers and integrate into the endoplasmic reticulum membrane. Heterooligomer VP2-VP3 may create a viroporin for transporting the viral genome across the endoplasmic reticulum membrane to the cytoplasm. Nuclear entry of the viral DNA involves the selective exposure and importin recognition of VP2 or VP3 nuclear localization signal (shared C-terminus). Plays a role in virion assembly within the nucleus. May participate in host cell lysis when associated with VP4. Its function is as follows. Viroporin inducing perforation of cellular membranes to trigger virus progeny release. Forms pores of 3 nm inner diameter. VP4 is expressed about 24 hours after the late structural proteins and is not incorporated into the mature virion. The sequence is that of Minor capsid protein VP2 from Simian virus 12 (strain wt100) (SV-12).